Here is a 274-residue protein sequence, read N- to C-terminus: Large ribosomal subunit protein uL2 (274 aa).

2 disordered regions span residues 37-60 (QHQK…GHKH) and 224-252 (AMNP…WGNL). The span at 50–60 (TTRHKGGGHKH) shows a compositional bias: basic residues. A compositionally biased stretch (basic and acidic residues) spans 229-246 (DHPHGGGEGRTGEGRHAV).

It belongs to the universal ribosomal protein uL2 family. Part of the 50S ribosomal subunit. Forms a bridge to the 30S subunit in the 70S ribosome.

Functionally, one of the primary rRNA binding proteins. Required for association of the 30S and 50S subunits to form the 70S ribosome, for tRNA binding and peptide bond formation. It has been suggested to have peptidyltransferase activity; this is somewhat controversial. Makes several contacts with the 16S rRNA in the 70S ribosome. This chain is Large ribosomal subunit protein uL2, found in Paracidovorax citrulli (strain AAC00-1) (Acidovorax citrulli).